Consider the following 259-residue polypeptide: UDP-2,3-diacylglucosamine hydrolase (259 aa).

5 residues coordinate Mn(2+): D8, H10, D41, N79, and H114. Position 79–80 (79–80 (NR)) interacts with substrate. Substrate is bound by residues D122, S160, N164, K167, and H195. Residues H195 and H197 each coordinate Mn(2+).

This sequence belongs to the LpxH family. Mn(2+) serves as cofactor.

It is found in the cell inner membrane. The catalysed reaction is UDP-2-N,3-O-bis[(3R)-3-hydroxytetradecanoyl]-alpha-D-glucosamine + H2O = 2-N,3-O-bis[(3R)-3-hydroxytetradecanoyl]-alpha-D-glucosaminyl 1-phosphate + UMP + 2 H(+). The protein operates within glycolipid biosynthesis; lipid IV(A) biosynthesis; lipid IV(A) from (3R)-3-hydroxytetradecanoyl-[acyl-carrier-protein] and UDP-N-acetyl-alpha-D-glucosamine: step 4/6. Hydrolyzes the pyrophosphate bond of UDP-2,3-diacylglucosamine to yield 2,3-diacylglucosamine 1-phosphate (lipid X) and UMP by catalyzing the attack of water at the alpha-P atom. Involved in the biosynthesis of lipid A, a phosphorylated glycolipid that anchors the lipopolysaccharide to the outer membrane of the cell. The protein is UDP-2,3-diacylglucosamine hydrolase of Edwardsiella ictaluri (strain 93-146).